We begin with the raw amino-acid sequence, 33 residues long: Dermaseptin-H9 (33 aa).

The residue at position 33 (Leu33) is a Leucine amide.

The protein belongs to the frog skin active peptide (FSAP) family. Dermaseptin subfamily. In terms of tissue distribution, expressed by the skin glands.

The protein localises to the secreted. In terms of biological role, has antimicrobial activity. In Pithecopus hypochondrialis (Orange-legged leaf frog), this protein is Dermaseptin-H9.